The chain runs to 491 residues: NADH-quinone oxidoreductase subunit N 1 (491 aa).

14 helical membrane passes run 9-29, 38-58, 76-96, 104-124, 126-146, 161-181, 211-231, 246-266, 276-296, 304-324, 329-349, 375-395, 410-432, and 461-481; these read IAAP…LDLL, PMYV…VPLW, FAAV…LLSF, SGYL…GGAG, LMVI…MIAF, FVLG…IYGA, VGVG…PFHI, AFMA…LLVA, FLLP…TVGI, LMAY…PGLG, SAAA…FAVV, VGVC…TGGF, AWIV…LKVI, and VVLA…GPVS.

This sequence belongs to the complex I subunit 2 family. NDH-1 is composed of 14 different subunits. Subunits NuoA, H, J, K, L, M, N constitute the membrane sector of the complex.

The protein resides in the cell membrane. It carries out the reaction a quinone + NADH + 5 H(+)(in) = a quinol + NAD(+) + 4 H(+)(out). In terms of biological role, NDH-1 shuttles electrons from NADH, via FMN and iron-sulfur (Fe-S) centers, to quinones in the respiratory chain. The immediate electron acceptor for the enzyme in this species is believed to be a menaquinone. Couples the redox reaction to proton translocation (for every two electrons transferred, four hydrogen ions are translocated across the cytoplasmic membrane), and thus conserves the redox energy in a proton gradient. The polypeptide is NADH-quinone oxidoreductase subunit N 1 (Symbiobacterium thermophilum (strain DSM 24528 / JCM 14929 / IAM 14863 / T)).